The following is a 445-amino-acid chain: uncharacterized protein (445 aa).

The interval 139 to 160 is disordered; sequence TESQKDLEYERKANKTKEENQQ.

This is an uncharacterized protein from Mycoplasma pneumoniae (strain ATCC 29342 / M129 / Subtype 1) (Mycoplasmoides pneumoniae).